The following is a 941-amino-acid chain: Protein UL87 (941 aa).

A glycan (N-linked (GlcNAc...) asparagine; by host) is linked at Asn-37. The tract at residues 482-508 (QRRSETGEEEEEETLESGETDATPPFD) is disordered. Residues 488-500 (GEEEEEETLESGE) are compositionally biased toward acidic residues. 3 N-linked (GlcNAc...) asparagine; by host glycosylation sites follow: Asn-591, Asn-661, and Asn-801. The segment covering 910–929 (VSSSSSVPSVPTSVSVDGSS) has biased composition (low complexity). The tract at residues 910–941 (VSSSSSVPSVPTSVSVDGSSEPTSPRARFASR) is disordered.

This sequence belongs to the herpesviridae UL87 family.

The protein localises to the host nucleus. In terms of biological role, functions concordantly with UL87 to initiate transcription from over half of all active viral promoters in late infection, without affecting host transcription. Acts on and binds to viral early-late and late kinetic-class promoters. The polypeptide is Protein UL87 (UL87) (Homo sapiens (Human)).